A 194-amino-acid chain; its full sequence is Fe/S biogenesis protein NfuA (194 aa).

[4Fe-4S] cluster is bound by residues Cys151 and Cys154.

Belongs to the NfuA family. As to quaternary structure, homodimer. Requires [4Fe-4S] cluster as cofactor.

Involved in iron-sulfur cluster biogenesis. Binds a 4Fe-4S cluster, can transfer this cluster to apoproteins, and thereby intervenes in the maturation of Fe/S proteins. Could also act as a scaffold/chaperone for damaged Fe/S proteins. The polypeptide is Fe/S biogenesis protein NfuA (Actinobacillus succinogenes (strain ATCC 55618 / DSM 22257 / CCUG 43843 / 130Z)).